A 265-amino-acid chain; its full sequence is Probable S-methyl-5'-thioinosine phosphorylase (265 aa).

Phosphate contacts are provided by residues S15 and 55-56 (RH). M187 is a substrate binding site. T188 contacts phosphate. A substrate-binding site is contributed by 211 to 213 (NYA).

Belongs to the PNP/MTAP phosphorylase family. MTAP subfamily. Homotrimer.

It catalyses the reaction S-methyl-5'-thioinosine + phosphate = 5-(methylsulfanyl)-alpha-D-ribose 1-phosphate + hypoxanthine. Its pathway is purine metabolism; purine nucleoside salvage. Its function is as follows. Catalyzes the reversible phosphorylation of S-methyl-5'-thioinosine (MTI) to hypoxanthine and 5-methylthioribose-1-phosphate. Involved in the breakdown of S-methyl-5'-thioadenosine (MTA), a major by-product of polyamine biosynthesis. Catabolism of (MTA) occurs via deamination to MTI and phosphorolysis to hypoxanthine. In Thermodesulfovibrio yellowstonii (strain ATCC 51303 / DSM 11347 / YP87), this protein is Probable S-methyl-5'-thioinosine phosphorylase.